Consider the following 277-residue polypeptide: Urease accessory protein UreD (277 aa).

Belongs to the UreD family. UreD, UreF and UreG form a complex that acts as a GTP-hydrolysis-dependent molecular chaperone, activating the urease apoprotein by helping to assemble the nickel containing metallocenter of UreC. The UreE protein probably delivers the nickel.

It localises to the cytoplasm. Its function is as follows. Required for maturation of urease via the functional incorporation of the urease nickel metallocenter. This chain is Urease accessory protein UreD, found in Pseudomonas putida (strain ATCC 47054 / DSM 6125 / CFBP 8728 / NCIMB 11950 / KT2440).